Consider the following 289-residue polypeptide: ATP synthase gamma chain (289 aa).

It belongs to the ATPase gamma chain family. F-type ATPases have 2 components, CF(1) - the catalytic core - and CF(0) - the membrane proton channel. CF(1) has five subunits: alpha(3), beta(3), gamma(1), delta(1), epsilon(1). CF(0) has three main subunits: a, b and c.

The protein localises to the cell inner membrane. Its function is as follows. Produces ATP from ADP in the presence of a proton gradient across the membrane. The gamma chain is believed to be important in regulating ATPase activity and the flow of protons through the CF(0) complex. The sequence is that of ATP synthase gamma chain from Nitrosococcus oceani (strain ATCC 19707 / BCRC 17464 / JCM 30415 / NCIMB 11848 / C-107).